Reading from the N-terminus, the 145-residue chain is Small ribosomal subunit protein eS19 (145 aa).

The disordered stretch occupies residues 120–145 (GGRRISENGQRDLDRIAAQTLEEDDE). Basic and acidic residues predominate over residues 123-134 (RISENGQRDLDR).

The protein belongs to the eukaryotic ribosomal protein eS19 family. In terms of assembly, component of the small ribosomal subunit. Mature ribosomes consist of a small (40S) and a large (60S) subunit. The 40S subunit contains about 32 different proteins and 1 molecule of RNA (18S). The 60S subunit contains 45 different proteins and 3 molecules of RNA (25S, 5.8S and 5S).

It is found in the cytoplasm. Functionally, component of the ribosome, a large ribonucleoprotein complex responsible for the synthesis of proteins in the cell. The small ribosomal subunit (SSU) binds messenger RNAs (mRNAs) and translates the encoded message by selecting cognate aminoacyl-transfer RNA (tRNA) molecules. The large subunit (LSU) contains the ribosomal catalytic site termed the peptidyl transferase center (PTC), which catalyzes the formation of peptide bonds, thereby polymerizing the amino acids delivered by tRNAs into a polypeptide chain. The nascent polypeptides leave the ribosome through a tunnel in the LSU and interact with protein factors that function in enzymatic processing, targeting, and the membrane insertion of nascent chains at the exit of the ribosomal tunnel. RPS19A is required for proper maturation of the small (40S) ribosomal subunit. The sequence is that of Small ribosomal subunit protein eS19 (RPS19A) from Candida albicans (strain SC5314 / ATCC MYA-2876) (Yeast).